Here is a 264-residue protein sequence, read N- to C-terminus: Inner membrane ABC transporter permease protein YdcV (264 aa).

Topologically, residues 1–12 (MHSERAPFFLKL) are cytoplasmic. Residues 13–33 (AAWGGVVFLHFPILIIAAYAF) form a helical membrane-spanning segment. Over 34 to 70 (NTEDAAFSFPPQGLTLRWFSVAAQRSDILDAVTLSLK) the chain is Periplasmic. Positions 65–252 (VTLSLKVAAL…MLVTTLPILG (188 aa)) constitute an ABC transmembrane type-1 domain. The chain crosses the membrane as a helical span at residues 71–91 (VAALATLIALVLGTLAAAALW). The Cytoplasmic segment spans residues 92–100 (RRDFFGKNA). The helical transmembrane segment at 101-121 (ISLLLLLPIALPGIVTGLALL) threads the bilayer. The Periplasmic segment spans residues 122–128 (TAFKTIN). The chain crosses the membrane as a helical span at residues 129 to 149 (LEPGFFTIVVGHATFCVVVVF). Over 150–189 (NNVIARFRRTSWSLVEASMDLGANGWQTFRYVVLPNLSSA) the chain is Cytoplasmic. A helical transmembrane segment spans residues 190 to 210 (LLAGGMLAFALSFDEIIVTTF). At 211-236 (TAGHERTLPLWLLNQLGRPRDVPVTN) the chain is on the periplasmic side. Residues 237–257 (VVALLVMLVTTLPILGAWWLT) form a helical membrane-spanning segment. The Cytoplasmic segment spans residues 258 to 264 (REGDNGQ).

Belongs to the binding-protein-dependent transport system permease family. CysTW subfamily.

The protein localises to the cell inner membrane. Functionally, probably part of the ABC transporter complex YdcSTUV. Probably responsible for the translocation of the substrate across the membrane. The sequence is that of Inner membrane ABC transporter permease protein YdcV (ydcV) from Shigella flexneri.